Consider the following 52-residue polypeptide: Insulin (52 aa).

3 cysteine pairs are disulfide-bonded: C7–C38, C19–C51, and C37–C42.

Belongs to the insulin family. As to quaternary structure, heterodimer of a B chain and an A chain linked by two disulfide bonds.

It localises to the secreted. Functionally, insulin decreases blood glucose concentration. It increases cell permeability to monosaccharides, amino acids and fatty acids. It accelerates glycolysis, the pentose phosphate cycle, and glycogen synthesis in liver. The protein is Insulin (ins) of Amia calva (Bowfin).